A 70-amino-acid chain; its full sequence is MFTLKKSLLLLFFLGTINLSLCEQERDADEEERRDDDEMDVEVEKRFLPLVASLAANFLPKLFCKITKKC.

The N-terminal stretch at 1 to 22 (MFTLKKSLLLLFFLGTINLSLC) is a signal peptide. Residues 23 to 44 (EQERDADEEERRDDDEMDVEVE) constitute a propeptide that is removed on maturation. Residues C64 and C70 are joined by a disulfide bond.

This sequence belongs to the frog skin active peptide (FSAP) family. Brevinin subfamily. As to expression, expressed by the skin glands.

The protein resides in the secreted. Its function is as follows. Antimicrobial peptide with activity against a variety of Gram-negative and Gram-positive bacteria and against fungi. Shows strong hemolytic activity against human erythrocytes. The protein is Brevinin-1MT1 of Amolops mantzorum (Sichuan torrent frog).